Reading from the N-terminus, the 421-residue chain is UDP-N-acetylglucosamine 1-carboxyvinyltransferase (421 aa).

22-23 (KN) serves as a coordination point for phosphoenolpyruvate. Arg92 contacts UDP-N-acetyl-alpha-D-glucosamine. Cys116 acts as the Proton donor in catalysis. Position 116 is a 2-(S-cysteinyl)pyruvic acid O-phosphothioketal (Cys116). UDP-N-acetyl-alpha-D-glucosamine contacts are provided by residues 121 to 125 (RPVDQ), Asp304, and Ile326.

Belongs to the EPSP synthase family. MurA subfamily.

The protein resides in the cytoplasm. The enzyme catalyses phosphoenolpyruvate + UDP-N-acetyl-alpha-D-glucosamine = UDP-N-acetyl-3-O-(1-carboxyvinyl)-alpha-D-glucosamine + phosphate. It functions in the pathway cell wall biogenesis; peptidoglycan biosynthesis. Functionally, cell wall formation. Adds enolpyruvyl to UDP-N-acetylglucosamine. In Bordetella avium (strain 197N), this protein is UDP-N-acetylglucosamine 1-carboxyvinyltransferase.